Here is an 813-residue protein sequence, read N- to C-terminus: Enhancer of polycomb homolog 1 (813 aa).

3 disordered regions span residues 310–403, 484–513, and 528–577; these read FKHQ…PFAF, MLSSPQPSPVNQFANTSEPNTSDRSSSKDL, and FRPR…SSGS. The span at 311 to 333 shows a compositional bias: basic and acidic residues; it reads KHQDATDSKEFKVNKQDKADLIR. K319 participates in a covalent cross-link: Glycyl lysine isopeptide (Lys-Gly) (interchain with G-Cter in SUMO2). Residues 346–361 show a composition bias toward low complexity; it reads PPSAAAPQQQSPAALP. Positions 486–513 are enriched in polar residues; it reads SSPQPSPVNQFANTSEPNTSDRSSSKDL. The residue at position 538 (S538) is a Phosphoserine. Residues 564-577 are compositionally biased toward low complexity; that stretch reads TCSTSTQNRSSSGS. Residue K650 forms a Glycyl lysine isopeptide (Lys-Gly) (interchain with G-Cter in SUMO2) linkage. The tract at residues 779 to 813 is disordered; sequence VPSSSSVDSVPRENHESEKPALNNIADNTVAMEVT. Residues 788 to 797 show a composition bias toward basic and acidic residues; it reads VPRENHESEK.

Belongs to the enhancer of polycomb family. Component of the NuA4 histone acetyltransferase complex which contains the catalytic subunit KAT5/TIP60 and the subunits EP400, TRRAP/PAF400, BRD8/SMAP, EPC1, DMAP1/DNMAP1, RUVBL1/TIP49, RUVBL2, ING3, actin, ACTL6A/BAF53A, MORF4L1/MRG15, MORF4L2/MRGX, MRGBP, YEATS4/GAS41, VPS72/YL1 and MEAF6. KAT5/TIP60, EPC1, and ING3 together constitute a minimal HAT complex termed Piccolo NuA4. Component of a NuA4-related complex which contains EP400, TRRAP/PAF400, SRCAP, BRD8/SMAP, EPC1, DMAP1/DNMAP1, RUVBL1/TIP49, RUVBL2, actin, ACTL6A/BAF53A, VPS72 and YEATS4/GAS41. Interacts with TRIM27. Interacts with MBTD1; interaction is direct and promotes recruitment of MBTD1 into the NuA4 histone acetyltransferase complex. In terms of tissue distribution, expressed in adult brain, heart, kidney, liver, lung, skeletal muscle and testis. Expressed in male germ cells, present in round spermatids of steps 1 to 4.

The protein resides in the nucleus. The protein localises to the cytoplasm. Component of the NuA4 histone acetyltransferase (HAT) complex, a multiprotein complex involved in transcriptional activation of select genes principally by acetylation of nucleosomal histones H4 and H2A. The NuA4 complex plays a direct role in repair of DNA double-strand breaks (DSBs) by promoting homologous recombination (HR). The NuA4 complex is also required for spermatid development by promoting acetylation of histones: histone acetylation is required for histone replacement during the transition from round to elongating spermatids. In the NuA4 complex, EPC1 is required to recruit MBTD1 into the complex. In Mus musculus (Mouse), this protein is Enhancer of polycomb homolog 1.